The sequence spans 241 residues: Small ribosomal subunit protein uS2 (241 aa).

It belongs to the universal ribosomal protein uS2 family.

This Shigella flexneri serotype 5b (strain 8401) protein is Small ribosomal subunit protein uS2.